Here is a 253-residue protein sequence, read N- to C-terminus: 4-hydroxy-tetrahydrodipicolinate reductase (253 aa).

Residues 8 to 13 (GAKGRM), Asp34, 76 to 78 (GTT), and 108 to 111 (APNF) each bind NAD(+). His138 functions as the Proton donor/acceptor in the catalytic mechanism. A (S)-2,3,4,5-tetrahydrodipicolinate-binding site is contributed by His139. The active-site Proton donor is Lys142. 148 to 149 (GT) lines the (S)-2,3,4,5-tetrahydrodipicolinate pocket.

It belongs to the DapB family.

Its subcellular location is the cytoplasm. The catalysed reaction is (S)-2,3,4,5-tetrahydrodipicolinate + NAD(+) + H2O = (2S,4S)-4-hydroxy-2,3,4,5-tetrahydrodipicolinate + NADH + H(+). It catalyses the reaction (S)-2,3,4,5-tetrahydrodipicolinate + NADP(+) + H2O = (2S,4S)-4-hydroxy-2,3,4,5-tetrahydrodipicolinate + NADPH + H(+). The protein operates within amino-acid biosynthesis; L-lysine biosynthesis via DAP pathway; (S)-tetrahydrodipicolinate from L-aspartate: step 4/4. In terms of biological role, catalyzes the conversion of 4-hydroxy-tetrahydrodipicolinate (HTPA) to tetrahydrodipicolinate. This is 4-hydroxy-tetrahydrodipicolinate reductase from Bifidobacterium animalis subsp. lactis (strain AD011).